The sequence spans 575 residues: Acyloxyacyl hydrolase (575 aa).

Residues 1–25 (MKSPWRILVVSPLLLLPLHSSTSRA) form the signal peptide. The propeptide occupies 26–34 (HDNQPGTIR). A Saposin B-type domain is found at 36–117 (DHYTCVGCVL…HTLEFCKQEP (82 aa)). An important for enzyme activity, localization to cytoplasmic vesicles, and protein stability region spans residues 37-69 (HYTCVGCVLVVSVIEQLAQVHNSTVQASMERLC). Cystine bridges form between Cys-40–Cys-113, Cys-43–Cys-107, Cys-69–Cys-82, Cys-122–Cys-453, Cys-159–Cys-168, Cys-205–Cys-229, Cys-248–Cys-328, and Cys-375–Cys-459. Asn-58 carries N-linked (GlcNAc...) asparagine glycosylation. Residues 172–176 (KLAIK) form a lipopolysaccharide binding region. Positions 183, 185, 187, 189, 204, 206, 207, 209, 212, 222, 226, 228, 230, 232, and 244 each coordinate Ca(2+). Residue Asn-206 is glycosylated (N-linked (GlcNAc...) asparagine). Ser-262 is an active-site residue. The N-linked (GlcNAc...) asparagine glycan is linked to Asn-466.

As to quaternary structure, heterodimer of the large and small subunits; disulfide-linked. The cofactor is Ca(2+). Cleaved into a large and a small subunit. In terms of processing, the small subunit is N-glycosylated.

Its subcellular location is the secreted. It is found in the cytoplasmic vesicle. The catalysed reaction is a 3-(acyloxy)acyl derivative of bacterial toxin + H2O = a 3-hydroxyacyl derivative of bacterial toxin + a fatty acid + H(+). In terms of biological role, removes the secondary (acyloxyacyl-linked) fatty acyl chains from the lipid A region of bacterial lipopolysaccharides (LPS). By breaking down LPS, terminates the host response to bacterial infection and prevents prolonged and damaging inflammatory responses. In peritoneal macrophages, seems to be important for recovery from a state of immune tolerance following infection by Gram-negative bacteria. The polypeptide is Acyloxyacyl hydrolase (Oryctolagus cuniculus (Rabbit)).